Here is a 259-residue protein sequence, read N- to C-terminus: Virion protein US10 homolog (259 aa).

A zinc finger lies at Cys162–Cys174.

This sequence belongs to the herpesviridae US10 family. Post-translationally, phosphorylated.

Its subcellular location is the virion tegument. The protein resides in the host nucleus matrix. In Equine herpesvirus 4 (strain 1942) (EHV-4), this protein is Virion protein US10 homolog.